The chain runs to 901 residues: HTH-type transcriptional regulator MalT (901 aa).

39 to 46 (SPAGYGKT) is a binding site for ATP. Positions 829 to 894 (ELIRTSPLTQ…AAVQHAQKLL (66 aa)) constitute an HTH luxR-type domain. A DNA-binding region (H-T-H motif) is located at residues 853-872 (NEQIAGELEVAATTIKTHIR).

This sequence belongs to the MalT family. As to quaternary structure, monomer in solution. Oligomerizes to an active state in the presence of the positive effectors ATP and maltotriose.

Its activity is regulated as follows. Activated by ATP and maltotriose, which are both required for DNA binding. Its function is as follows. Positively regulates the transcription of the maltose regulon whose gene products are responsible for uptake and catabolism of malto-oligosaccharides. Specifically binds to the promoter region of its target genes, recognizing a short DNA motif called the MalT box. This chain is HTH-type transcriptional regulator MalT, found in Escherichia coli O6:K15:H31 (strain 536 / UPEC).